Consider the following 183-residue polypeptide: Ribulose bisphosphate carboxylase small subunit, chloroplastic 4 (183 aa).

Residues 1–57 (MASSLMSNAATTMAAATTTAQANMVAPFNGLKSISAFPVTRKNNDITSVASNGGRVQ) constitute a chloroplast transit peptide.

Belongs to the RuBisCO small chain family. In terms of assembly, heterohexadecamer of 8 large and 8 small subunits.

The protein localises to the plastid. The protein resides in the chloroplast. Functionally, ruBisCO catalyzes two reactions: the carboxylation of D-ribulose 1,5-bisphosphate, the primary event in carbon dioxide fixation, as well as the oxidative fragmentation of the pentose substrate. Both reactions occur simultaneously and in competition at the same active site. Although the small subunit is not catalytic it is essential for maximal activity. In Mesembryanthemum crystallinum (Common ice plant), this protein is Ribulose bisphosphate carboxylase small subunit, chloroplastic 4.